The chain runs to 523 residues: MIPDVSSDTLFWLKANPQALQGIYRGVERETLRINTQGHLAQTPHPKKLGAALTHKWITTDFAETLLEFITPVAQDIDHMLTLLRDIHRHVARHLCNEWMWPMSMPCFIDSQQQIKLAQYGPSNMGRMKTLYRKGLKNRYSAMMQIISGVHYNFSLPLTFWQVYAGVSDMNSNKDIISAGYLGLIRNYYRFGWIIPYIFGASPGVCQSFMKNRDTDLPFIKASSGFLYLPYATSLRMSDLGYANKSQSQLDITFNSLKEYVFRLKHAIRTPYADYQRIGLKKNGSYLQLNTNILQSENELYAPIRPKRITKNEESPLDALLRRGIEYIEVRALDINPFSPVGIDEEQVRFLDLFLIWCTLAPAPKMSTRELLYTRLNWTKVILEGRKPGLTLIVDGGSSKKPLATIGKELFSAMQALAETLDSHNGNIQYQQVCHKLRACIDQPELTLSARILKEMKKYGIRGLGLTLANQYFQILLEEPLEMFNELTFDKEQIRSWHRQLELEALDILSFDDFLAHINSHQQ.

This sequence belongs to the glutamate--cysteine ligase type 1 family. Type 1 subfamily.

It carries out the reaction L-cysteine + L-glutamate + ATP = gamma-L-glutamyl-L-cysteine + ADP + phosphate + H(+). It functions in the pathway sulfur metabolism; glutathione biosynthesis; glutathione from L-cysteine and L-glutamate: step 1/2. This is Glutamate--cysteine ligase from Baumannia cicadellinicola subsp. Homalodisca coagulata.